Consider the following 425-residue polypeptide: 1,4-beta-D-glucan glucohydrolase (425 aa).

Glu-164 acts as the Proton donor in catalysis. Glu-349 functions as the Nucleophile in the catalytic mechanism.

This sequence belongs to the glycosyl hydrolase 1 family. In terms of assembly, monomer.

The enzyme catalyses Hydrolysis of (1-&gt;4)-linkages in (1-&gt;4)-beta-D-glucans, to remove successive glucose units.. It catalyses the reaction Hydrolysis of terminal, non-reducing beta-D-glucosyl residues with release of beta-D-glucose.. It functions in the pathway glycan metabolism; cellulose degradation. It participates in glycan metabolism; beta-D-glucan degradation. Broad substrate specificity glycosidase. Releases glucose from soluble glucooligomers, with a preference for longer oligomers; acts more readily on cellotetraose than on cellobiose. Displays similar activities towards the disaccharides lactose and cellobiose. Is also able to hydrolyze various aryl-beta-glycosides in vitro. This chain is 1,4-beta-D-glucan glucohydrolase (bglA), found in Thermotoga neapolitana.